The following is an 854-amino-acid chain: N-terminal acetyltransferase A complex subunit NAT1 (854 aa).

Position 2 is an N-acetylserine (Ser2). TPR repeat units lie at residues Glu20–His53, Val54–Ala87, Pro91–Asn124, Gln126–Trp162, Phe241–Asn274, Ile384–Leu417, and Arg452–Val485. Residues Leu623 to Lys667 adopt a coiled-coil conformation. The tract at residues Lys626 to Ser668 is disordered. Phosphoserine is present on Ser674. The stretch at Ala728–Asn761 is one TPR 8 repeat.

In terms of assembly, component of the N-terminal acetyltransferase A (NatA) complex, which is composed of ARD1, NAT1 and NAT5. Can self-associate. NAT1 associates with the nascent polypeptide chain and the ribosome. In terms of processing, the N-terminus is blocked.

It localises to the cytoplasm. Functionally, non-catalytic component of the NatA N-terminal acetyltransferase, which catalyzes acetylation of proteins beginning with Met-Ser, Met-Gly and Met-Ala. N-acetylation plays a role in normal eukaryotic translation and processing, protect against proteolytic degradation and protein turnover. NAT1 anchors ARD1 and NAT5 to the ribosome and may present the N termini of nascent polypeptides for acetylation. The polypeptide is N-terminal acetyltransferase A complex subunit NAT1 (NAT1) (Saccharomyces cerevisiae (strain ATCC 204508 / S288c) (Baker's yeast)).